Here is a 416-residue protein sequence, read N- to C-terminus: Diaminobutyrate--2-oxoglutarate transaminase (416 aa).

At K263 the chain carries N6-(pyridoxal phosphate)lysine.

It belongs to the class-III pyridoxal-phosphate-dependent aminotransferase family. Requires pyridoxal 5'-phosphate as cofactor.

It carries out the reaction L-2,4-diaminobutanoate + 2-oxoglutarate = L-aspartate 4-semialdehyde + L-glutamate. It functions in the pathway amine and polyamine biosynthesis; ectoine biosynthesis; L-ectoine from L-aspartate 4-semialdehyde: step 1/3. In terms of biological role, catalyzes reversively the conversion of L-aspartate beta-semialdehyde (ASA) to L-2,4-diaminobutyrate (DABA) by transamination with L-glutamate. This chain is Diaminobutyrate--2-oxoglutarate transaminase (ectB), found in Virgibacillus pantothenticus.